We begin with the raw amino-acid sequence, 402 residues long: Triose phosphate/phosphate translocator, chloroplastic (402 aa).

A chloroplast-targeting transit peptide spans 1–72 (MESRVLSRAT…KGASLLRPCP (72 aa)). Residues 73 to 96 (ATAGGNDSAGEEKVAPVGFFSRYP) are Chloroplast intermembrane-facing. A helical transmembrane segment spans residues 97-117 (ALTTGFFFFTWYFLNVIFNIL). The Lumenal segment spans residues 118–129 (NKKIYNYFPYPY). Residues 130–150 (FVSVIHLAVGVVYCLVSWTVG) form a helical membrane-spanning segment. The Chloroplast intermembrane segment spans residues 151–207 (LPKRAPIDGNLLKLLIPVAVCHALGHVTSNVSFAAVAVSFTHTVKALEPFFNAAASQ). A helical membrane pass occupies residues 208–228 (FILGQSIPITLWLSLAPVVIG). The Lumenal segment spans residues 229 to 272 (VSMASLTELSFNWLGFISAMISNISFTYRSIYSKKAMTDMDSTN). A helical transmembrane segment spans residues 273-292 (IYAYISIIALIVCIPPALII). Over 293–370 (EGPTLLKTGF…IIFGNKISTQ (78 aa)) the chain is Chloroplast intermembrane. A helical membrane pass occupies residues 371–391 (TGIGTGIAIAGVALYSFIKAQ). Topologically, residues 392 to 402 (IEEEKRQAKAA) are lumenal.

This sequence belongs to the TPT transporter family. TPT (TC 2.A.7.9) subfamily. Homodimer.

The protein localises to the plastid. Its subcellular location is the chloroplast membrane. In terms of biological role, mediates the export of fixed carbons from the chloroplasts into the cytosol in the form of triose phosphates. This Pisum sativum (Garden pea) protein is Triose phosphate/phosphate translocator, chloroplastic.